Reading from the N-terminus, the 329-residue chain is Beta-ketoacyl-[acyl-carrier-protein] synthase III (329 aa).

Active-site residues include C113 and H255. The interval 256 to 260 (QANQR) is ACP-binding. N285 is a catalytic residue.

It belongs to the thiolase-like superfamily. FabH family. As to quaternary structure, homodimer.

The protein resides in the cytoplasm. It carries out the reaction malonyl-[ACP] + acetyl-CoA + H(+) = 3-oxobutanoyl-[ACP] + CO2 + CoA. The protein operates within lipid metabolism; fatty acid biosynthesis. In terms of biological role, catalyzes the condensation reaction of fatty acid synthesis by the addition to an acyl acceptor of two carbons from malonyl-ACP. Catalyzes the first condensation reaction which initiates fatty acid synthesis and may therefore play a role in governing the total rate of fatty acid production. Possesses both acetoacetyl-ACP synthase and acetyl transacylase activities. Its substrate specificity determines the biosynthesis of branched-chain and/or straight-chain of fatty acids. This chain is Beta-ketoacyl-[acyl-carrier-protein] synthase III, found in Chlorobium chlorochromatii (strain CaD3).